Here is a 62-residue protein sequence, read N- to C-terminus: Toxin Tb2 (62 aa).

Positions 1–62 (KEGYAMDHEG…KVWDYATNKC (62 aa)) constitute an LCN-type CS-alpha/beta domain. 4 disulfide bridges follow: cysteine 11–cysteine 62, cysteine 15–cysteine 38, cysteine 23–cysteine 43, and cysteine 27–cysteine 45. Cysteine 62 carries the cysteine amide modification.

It belongs to the long (4 C-C) scorpion toxin superfamily. Sodium channel inhibitor family. Beta subfamily. In terms of tissue distribution, expressed by the venom gland.

Its subcellular location is the secreted. Functionally, beta toxins bind voltage-independently at site-4 of sodium channels (Nav) and shift the voltage of activation toward more negative potentials thereby affecting sodium channel activation and promoting spontaneous and repetitive firing. This toxin is active on mammals. This chain is Toxin Tb2, found in Tityus bahiensis (Brazilian scorpion).